The sequence spans 428 residues: C4-dicarboxylate transport protein (428 aa).

The next 8 membrane-spanning stretches (helical) occupy residues 8 to 28 (SLYF…HFYP), 44 to 64 (LIKM…IAGM), 76 to 96 (VALL…LIIV), 142 to 162 (IGAF…LFGF), 184 to 204 (VIFG…FGAM), 222 to 242 (LIIC…GSIA), 326 to 346 (IFHQ…AAGV), and 352 to 372 (IVLA…LALI).

It belongs to the dicarboxylate/amino acid:cation symporter (DAACS) (TC 2.A.23) family.

Its subcellular location is the cell inner membrane. Its function is as follows. Responsible for the transport of dicarboxylates such as succinate, fumarate, and malate from the periplasm across the membrane. The polypeptide is C4-dicarboxylate transport protein (Enterobacter sp. (strain 638)).